We begin with the raw amino-acid sequence, 285 residues long: MAVVTMKQLLDSGAHFGHQTRRWNPKMKRFIFTDRNGIYIIDLQQTLTYIDKAYEFVKETVAHGGTVLFVGTKKQAQESIAAEATRVGMPYVNQRWLGGMLTNFSTVHKRLQRLKELEAMEQTGGFEGRTKKEILMLTREMNKLERTLGGIRDMQKVPSAIWVVDTNKEHIAVGEARKLNIPVIAILDTNCDPDLVDYPIPGNDDAIRSAALLTKVVASAVAEGVQARAGLASGDAKPEAGAGEPLAEWEQELLAQANPNAEGSAEAAPAAATEEAPAAQTPADF.

Positions 229–285 (AGLASGDAKPEAGAGEPLAEWEQELLAQANPNAEGSAEAAPAAATEEAPAAQTPADF) are disordered. Positions 257–285 (ANPNAEGSAEAAPAAATEEAPAAQTPADF) are enriched in low complexity.

The protein belongs to the universal ribosomal protein uS2 family.

The protein is Small ribosomal subunit protein uS2 of Nocardia farcinica (strain IFM 10152).